Here is a 171-residue protein sequence, read N- to C-terminus: Co-chaperone protein HscB (171 aa).

Residues 2–74 form the J domain; the sequence is DYFTLFGLPA…LTRAEYLLSL (73 aa).

The protein belongs to the HscB family. As to quaternary structure, interacts with HscA and stimulates its ATPase activity. Interacts with IscU.

Its function is as follows. Co-chaperone involved in the maturation of iron-sulfur cluster-containing proteins. Seems to help targeting proteins to be folded toward HscA. The sequence is that of Co-chaperone protein HscB from Salmonella paratyphi A (strain AKU_12601).